Here is a 584-residue protein sequence, read N- to C-terminus: A-type ATP synthase subunit A (584 aa).

233–240 (GPFGSGKT) is an ATP binding site.

The protein belongs to the ATPase alpha/beta chains family. In terms of assembly, has multiple subunits with at least A(3), B(3), C, D, E, F, H, I and proteolipid K(x).

Its subcellular location is the cell membrane. It catalyses the reaction ATP + H2O + 4 H(+)(in) = ADP + phosphate + 5 H(+)(out). Its function is as follows. Component of the A-type ATP synthase that produces ATP from ADP in the presence of a proton gradient across the membrane. The A chain is the catalytic subunit. This Methanothermobacter thermautotrophicus (strain ATCC 29096 / DSM 1053 / JCM 10044 / NBRC 100330 / Delta H) (Methanobacterium thermoautotrophicum) protein is A-type ATP synthase subunit A.